We begin with the raw amino-acid sequence, 236 residues long: Phosphoribosylaminoimidazole-succinocarboxamide synthase (236 aa).

This sequence belongs to the SAICAR synthetase family.

It carries out the reaction 5-amino-1-(5-phospho-D-ribosyl)imidazole-4-carboxylate + L-aspartate + ATP = (2S)-2-[5-amino-1-(5-phospho-beta-D-ribosyl)imidazole-4-carboxamido]succinate + ADP + phosphate + 2 H(+). The protein operates within purine metabolism; IMP biosynthesis via de novo pathway; 5-amino-1-(5-phospho-D-ribosyl)imidazole-4-carboxamide from 5-amino-1-(5-phospho-D-ribosyl)imidazole-4-carboxylate: step 1/2. This is Phosphoribosylaminoimidazole-succinocarboxamide synthase from Campylobacter jejuni subsp. doylei (strain ATCC BAA-1458 / RM4099 / 269.97).